The primary structure comprises 266 residues: Putative hydro-lyase Jann_2570 (266 aa).

This sequence belongs to the D-glutamate cyclase family.

In Jannaschia sp. (strain CCS1), this protein is Putative hydro-lyase Jann_2570.